A 145-amino-acid polypeptide reads, in one-letter code: Large-conductance mechanosensitive channel (145 aa).

3 consecutive transmembrane segments (helical) span residues V14 to L34, L38 to P58, and G81 to V101.

This sequence belongs to the MscL family. Homopentamer.

It is found in the cell inner membrane. In terms of biological role, channel that opens in response to stretch forces in the membrane lipid bilayer. May participate in the regulation of osmotic pressure changes within the cell. In Rhizobium leguminosarum bv. trifolii (strain WSM2304), this protein is Large-conductance mechanosensitive channel.